The sequence spans 59 residues: Protein translocase subunit SecE (59 aa).

The helical transmembrane segment at G37–L57 threads the bilayer.

Belongs to the SecE/SEC61-gamma family. In terms of assembly, component of the Sec protein translocase complex. Heterotrimer consisting of SecY (alpha), SecG (beta) and SecE (gamma) subunits. The heterotrimers can form oligomers, although 1 heterotrimer is thought to be able to translocate proteins. Interacts with the ribosome. May interact with SecDF, and other proteins may be involved.

The protein resides in the cell membrane. Functionally, essential subunit of the Sec protein translocation channel SecYEG. Clamps together the 2 halves of SecY. May contact the channel plug during translocation. The chain is Protein translocase subunit SecE from Methanothermobacter thermautotrophicus (strain ATCC 29096 / DSM 1053 / JCM 10044 / NBRC 100330 / Delta H) (Methanobacterium thermoautotrophicum).